The chain runs to 207 residues: Ribosomal RNA small subunit methyltransferase G (207 aa).

Residues Gly-77, Phe-82, 100-102, and Arg-141 each bind S-adenosyl-L-methionine; that span reads ERS.

This sequence belongs to the methyltransferase superfamily. RNA methyltransferase RsmG family.

The protein localises to the cytoplasm. In terms of biological role, specifically methylates the N7 position of a guanine in 16S rRNA. The sequence is that of Ribosomal RNA small subunit methyltransferase G from Borrelia turicatae (strain 91E135).